We begin with the raw amino-acid sequence, 100 residues long: Urease subunit gamma (100 aa).

This sequence belongs to the urease gamma subunit family. In terms of assembly, heterotrimer of UreA (gamma), UreB (beta) and UreC (alpha) subunits. Three heterotrimers associate to form the active enzyme.

Its subcellular location is the cytoplasm. The catalysed reaction is urea + 2 H2O + H(+) = hydrogencarbonate + 2 NH4(+). Its pathway is nitrogen metabolism; urea degradation; CO(2) and NH(3) from urea (urease route): step 1/1. In Mycobacterium ulcerans (strain Agy99), this protein is Urease subunit gamma.